Here is a 322-residue protein sequence, read N- to C-terminus: Undecaprenyl-phosphate 4-deoxy-4-formamido-L-arabinose transferase (322 aa).

Over 1–235 the chain is Cytoplasmic; sequence MFEIHPVKKV…TCLTTTPLRM (235 aa). The helical transmembrane segment at 236–256 threads the bilayer; that stretch reads LSLLGSIIAIGGFSIAVLLVI. Over 257–269 the chain is Periplasmic; sequence LRLTFGPQWAAEG. The helical transmembrane segment at 270–290 threads the bilayer; the sequence is VFMLFAVLFTFIGAQFIGMGL. Over 291 to 322 the chain is Cytoplasmic; it reads LGEYIGRIYTDVRARPRYFVQQVIRPSSKENE.

Belongs to the glycosyltransferase 2 family.

It localises to the cell inner membrane. The catalysed reaction is UDP-4-deoxy-4-formamido-beta-L-arabinose + di-trans,octa-cis-undecaprenyl phosphate = 4-deoxy-4-formamido-alpha-L-arabinopyranosyl di-trans,octa-cis-undecaprenyl phosphate + UDP. It participates in glycolipid biosynthesis; 4-amino-4-deoxy-alpha-L-arabinose undecaprenyl phosphate biosynthesis; 4-amino-4-deoxy-alpha-L-arabinose undecaprenyl phosphate from UDP-4-deoxy-4-formamido-beta-L-arabinose and undecaprenyl phosphate: step 1/2. It functions in the pathway bacterial outer membrane biogenesis; lipopolysaccharide biosynthesis. Catalyzes the transfer of 4-deoxy-4-formamido-L-arabinose from UDP to undecaprenyl phosphate. The modified arabinose is attached to lipid A and is required for resistance to polymyxin and cationic antimicrobial peptides. The protein is Undecaprenyl-phosphate 4-deoxy-4-formamido-L-arabinose transferase of Shigella flexneri serotype 5b (strain 8401).